Reading from the N-terminus, the 89-residue chain is Elongation factor 1-beta (89 aa).

The protein belongs to the EF-1-beta/EF-1-delta family.

Functionally, promotes the exchange of GDP for GTP in EF-1-alpha/GDP, thus allowing the regeneration of EF-1-alpha/GTP that could then be used to form the ternary complex EF-1-alpha/GTP/AAtRNA. The protein is Elongation factor 1-beta of Methanococcus maripaludis (strain C6 / ATCC BAA-1332).